A 688-amino-acid chain; its full sequence is MSGPNRTYSFGEGDDSLAHPSSRTHAMHSQYDDVSPISDGARMNPMNGQGMDHGLASVLEDGRQGWGRSPEPSPSLLTGSSATPGMDNLGPGAVGGGISGIALSVANSHDRLSGVEALMGTDGQEANIPAERGLSTTGSDNPYVPEPPEHRYSYGSNIALGAAAAPAGQLTPGQSVSHLSSTNPSQRNLYDIPYQDVGGLNAGPYQRHSAYSSNDLPVDINPDEIVDDGDDGFVPAPNSGSGARKSQAIPAAAGGAAAGGVLGNLGGLFGGKSAADTSYGPVPGAGLEAGEKGRWVKPKPGGGNKKRGWIVGAILAFIIIGAIVGGAVGGTIGHRGNEEPSSASSASSSSTQTATEDTSVNGDLDKNSAEIKALMNNKNLHKVFPGIDYTPWGVQYPLCLKYPPSQNNVTRDMAVLTQLTNNVRLYGTDCNQTEMVLHAIDKLEIKDMKIWLGVWIDSNETTSRRQIDQLYKIIDDAKDISIFNGAIVGNEALYRAGSDKTSAQTTLINYMQEVKDHFKKKNIDLPVATSDLGDNWDATLVQAADVVMANVHPFFGGIPVDQAAAWTWRFWQDHNVALTKGTNKKQIISEVGWPSGGGNDCGQGANCPNDTAGAVAGVDELNKFMEDWVCQALDNGTDYFWFEAFDEPWKIVYNTGKENWEDKWGLMDSARNLKPGLKIPDCGGKTAT.

3 disordered regions span residues 1 to 91 (MSGP…NLGP), 126 to 148 (ANIPAERGLSTTGSDNPYVPEPP), and 168 to 195 (GQLTPGQSVSHLSSTNPSQRNLYDIPYQ). The Cytoplasmic segment spans residues 1–307 (MSGPNRTYSF…PKPGGGNKKR (307 aa)). Residues 175 to 188 (SVSHLSSTNPSQRN) show a composition bias toward polar residues. The helical; Signal-anchor for type II membrane protein transmembrane segment at 308–328 (GWIVGAILAFIIIGAIVGGAV) threads the bilayer. Residues 329–688 (GGTIGHRGNE…IPDCGGKTAT (360 aa)) lie on the Extracellular side of the membrane. The interval 334–363 (HRGNEEPSSASSASSSSTQTATEDTSVNGD) is disordered. Residues 341 to 355 (SSASSASSSSTQTAT) are compositionally biased toward low complexity. Residues asparagine 408, asparagine 431, and asparagine 459 are each glycosylated (N-linked (GlcNAc...) asparagine). Glutamate 491 (proton donor) is an active-site residue. The Nucleophile role is filled by glutamate 590. Residues asparagine 609 and asparagine 635 are each glycosylated (N-linked (GlcNAc...) asparagine).

It belongs to the glycosyl hydrolase 17 family.

Its subcellular location is the cell membrane. It carries out the reaction Hydrolysis of (1-&gt;3)-beta-D-glucosidic linkages in (1-&gt;3)-beta-D-glucans.. In terms of biological role, glucanases play a role in cell expansion during growth, in cell-cell fusion during mating, and in spore release during sporulation. This enzyme may be involved in beta-glucan degradation. Active on laminarin and lichenan. The polypeptide is Probable glucan endo-1,3-beta-glucosidase btgC (btgC) (Aspergillus fumigatus (strain ATCC MYA-4609 / CBS 101355 / FGSC A1100 / Af293) (Neosartorya fumigata)).